The primary structure comprises 222 residues: Deoxyribose-phosphate aldolase (222 aa).

The active-site Proton donor/acceptor is Asp-90. Lys-152 acts as the Schiff-base intermediate with acetaldehyde in catalysis. Lys-181 serves as the catalytic Proton donor/acceptor.

It belongs to the DeoC/FbaB aldolase family. DeoC type 1 subfamily.

It is found in the cytoplasm. The catalysed reaction is 2-deoxy-D-ribose 5-phosphate = D-glyceraldehyde 3-phosphate + acetaldehyde. It participates in carbohydrate degradation; 2-deoxy-D-ribose 1-phosphate degradation; D-glyceraldehyde 3-phosphate and acetaldehyde from 2-deoxy-alpha-D-ribose 1-phosphate: step 2/2. In terms of biological role, catalyzes a reversible aldol reaction between acetaldehyde and D-glyceraldehyde 3-phosphate to generate 2-deoxy-D-ribose 5-phosphate. This Pectobacterium carotovorum subsp. carotovorum (strain PC1) protein is Deoxyribose-phosphate aldolase.